Consider the following 179-residue polypeptide: Large ribosomal subunit protein uL5 (179 aa).

It belongs to the universal ribosomal protein uL5 family. As to quaternary structure, part of the 50S ribosomal subunit; part of the 5S rRNA/L5/L18/L25 subcomplex. Contacts the 5S rRNA and the P site tRNA. Forms a bridge to the 30S subunit in the 70S ribosome.

This is one of the proteins that bind and probably mediate the attachment of the 5S RNA into the large ribosomal subunit, where it forms part of the central protuberance. In the 70S ribosome it contacts protein S13 of the 30S subunit (bridge B1b), connecting the 2 subunits; this bridge is implicated in subunit movement. Contacts the P site tRNA; the 5S rRNA and some of its associated proteins might help stabilize positioning of ribosome-bound tRNAs. This chain is Large ribosomal subunit protein uL5, found in Francisella tularensis subsp. mediasiatica (strain FSC147).